The sequence spans 556 residues: Putative cysteine ligase BshC (556 aa).

Coiled-coil stretches lie at residues 408 to 442 (ILQK…IAQA) and 468 to 513 (LGQV…ANLT).

The protein belongs to the BshC family.

Involved in bacillithiol (BSH) biosynthesis. May catalyze the last step of the pathway, the addition of cysteine to glucosamine malate (GlcN-Mal) to generate BSH. This Symbiobacterium thermophilum (strain DSM 24528 / JCM 14929 / IAM 14863 / T) protein is Putative cysteine ligase BshC.